The following is a 464-amino-acid chain: CD-NTase-associated protein 4 (464 aa).

An N-terminal endonuclease domain region spans residues methionine 1 to glutamate 228. The segment at glutamate 229–isoleucine 464 is C-terminal SAVED domain.

Belongs to the Cap4 nuclease family. A monomer in the absence of cAAA, in its presence it forms oligomers.

With respect to regulation, DNase activity is activated upon ligand binding. Its function is as follows. Effector DNase of a CBASS antivirus system. CBASS (cyclic oligonucleotide-based antiphage signaling system) provides immunity against bacteriophage. The CD-NTase protein synthesizes cyclic nucleotides in response to infection; these serve as specific second messenger signals. The signals activate a diverse range of effectors, leading to bacterial cell death and thus abortive phage infection. A type II-C CBASS system. Functionally, probably in the presence of its endogenous cyclic nucleotide (synthesized by the cognate CD-NTase protein in the CBASS operon), or of 2',3',3'-cyclic AMP-AMP-AMP (cAAA) synthesized by Acinetobacter sp. ATCC 27244, endonucleolytically degrades dsDNA in a non-sequence specific manner. It is not activated by other cyclic nucleotides. This Moraxella osloensis protein is CD-NTase-associated protein 4.